The following is a 217-amino-acid chain: Aprataxin-like protein (217 aa).

The region spanning 6 to 139 (ALKNYVTSPE…HIHVISKDFH (134 aa)) is the HIT domain. 3 interaction with DNA regions span residues 34 to 38 (DSFPK), 121 to 132 (HSVPSMANLHIH), and 144 to 148 (KNKKH). The active-site Nucleophile is the histidine 130. 4 residues coordinate Zn(2+): cysteine 188, cysteine 191, histidine 205, and glutamate 209.

It localises to the nucleus. The protein resides in the cytoplasm. It carries out the reaction a 5'-end adenosine-5'-diphospho-5'-2'-deoxyribonucleoside-DNA + H2O = a 5'-end 5'-phospho-2'-deoxyribonucleoside-DNA + AMP + 2 H(+). It catalyses the reaction a 5'-end adenosine-5'-diphospho-5'-ribonucleoside-2'-deoxyribonucleotide-DNA + H2O = a 5'-end 5'-phospho-ribonucleoside-2'-deoxyribonucleotide-DNA + AMP + 2 H(+). The catalysed reaction is a 3'-end 2'-deoxyribonucleotide-3'-diphospho-5'-guanosine-DNA + H2O = a 3'-end 2'-deoxyribonucleotide 3'-phosphate-DNA + GMP + 2 H(+). Functionally, DNA-binding protein involved in single-strand DNA break repair, double-strand DNA break repair and base excision repair. Resolves abortive DNA ligation intermediates formed either at base excision sites, or when DNA ligases attempt to repair non-ligatable breaks induced by reactive oxygen species. Catalyzes the release of adenylate groups covalently linked to 5'-phosphate termini, resulting in the production of 5'-phosphate termini that can be efficiently rejoined. Likewise, catalyzes the release of 3'-linked guanosine (DNAppG) and inosine (DNAppI) from DNA, but has higher specific activity with 5'-linked adenosine (AppDNA). This is Aprataxin-like protein (HNT3) from Saccharomyces cerevisiae (strain ATCC 204508 / S288c) (Baker's yeast).